A 148-amino-acid polypeptide reads, in one-letter code: Ubiquitin conjugating enzyme E2 B (148 aa).

One can recognise a UBC core domain in the interval 2-148 (AAHKRLQKEI…AKEWTKKYAK (147 aa)). C87 functions as the Glycyl thioester intermediate in the catalytic mechanism.

Belongs to the ubiquitin-conjugating enzyme family. As to quaternary structure, interacts with mkkA (via F-box/WD40 repeat domains).

The enzyme catalyses S-ubiquitinyl-[E1 ubiquitin-activating enzyme]-L-cysteine + [E2 ubiquitin-conjugating enzyme]-L-cysteine = [E1 ubiquitin-activating enzyme]-L-cysteine + S-ubiquitinyl-[E2 ubiquitin-conjugating enzyme]-L-cysteine.. It participates in protein modification; protein ubiquitination. In terms of biological role, involved in protein ubiquitination and degradation during development. Mediates protein ubiquitination at the mound and finger stage required for subsequent development and may be an essential component of the developmental transition between the induction of postaggregative gene expression and subsequent cell-type differentiation and morphogenesis. ubcB and ubpB differentially control ubiquitination/deubiquitination and degradation of mkkA protein in a cell-type-specific and temporally regulated manner. The polypeptide is Ubiquitin conjugating enzyme E2 B (ubcB) (Dictyostelium discoideum (Social amoeba)).